Here is a 468-residue protein sequence, read N- to C-terminus: MTDSRPVVTRFAPSPTGYLHIGGARTALFNWLFARGRNGKFLLRIEDTDRTRSTPEATEAILQGLRWLGLDWDGEPVSQFAGRERHAEVAHAMLENGTAYKCFSTTEEIEAFREQAKAEGRSTLFLSPWRDADPAGLPDAPYAIRLKAPRDGETVVRDAVQGDVTFGNAQLDDMVLLRSDGTPTYMLAVVVDDHDMGVTHVIRGDDHLTNAARQIQIYQAMGWDIPVFAHIPLIHGTDGKKLSKRHGAVGLHEYAAMGYPAAAMRNYLARLGWSHGDDELFDDAQAKAWFDLDGIGKAPARLDFKKLEHVSGWHIARMDDVELLDEIADFRAATGAEPLSERQVARLRPALGALKTKAKTLPALLEQAHFALIDRPVQIEEKAAAALDIVSRSILKELTAAVQNASWGRDELEAAAKQIGESHGLGLGKVAAPLRAALAGRSSTPSVFDMMLALGRDETLARMQDQAG.

The short motif at 13 to 23 is the 'HIGH' region element; sequence PSPTGYLHIGG. The 'KMSKS' region signature appears at 241–245; sequence KLSKR. An ATP-binding site is contributed by K244.

This sequence belongs to the class-I aminoacyl-tRNA synthetase family. Glutamate--tRNA ligase type 1 subfamily. In terms of assembly, monomer.

Its subcellular location is the cytoplasm. It catalyses the reaction tRNA(Glu) + L-glutamate + ATP = L-glutamyl-tRNA(Glu) + AMP + diphosphate. Functionally, catalyzes the attachment of glutamate to tRNA(Glu) in a two-step reaction: glutamate is first activated by ATP to form Glu-AMP and then transferred to the acceptor end of tRNA(Glu). In Paracoccus denitrificans (strain Pd 1222), this protein is Glutamate--tRNA ligase 2.